The sequence spans 146 residues: MKKLLLVNGPNLNRLGVREVNVYGKGTLATLEADMKQEAETMGVELECFQSNHEGAIIDIIHEAEDIYEGIILNPGAFTHYSYAIRDAIASISIPVIEVHISNIHQRESFRHESVTAAVCAGQIVGFGFYGYKLALFALMEKLRGA.

Y23 serves as the catalytic Proton acceptor. Substrate is bound by residues N74, H80, and D87. The Proton donor role is filled by H100. Substrate-binding positions include 101 to 102 (IS) and R111.

The protein belongs to the type-II 3-dehydroquinase family. As to quaternary structure, homododecamer.

It catalyses the reaction 3-dehydroquinate = 3-dehydroshikimate + H2O. Its pathway is metabolic intermediate biosynthesis; chorismate biosynthesis; chorismate from D-erythrose 4-phosphate and phosphoenolpyruvate: step 3/7. Functionally, catalyzes a trans-dehydration via an enolate intermediate. This is 3-dehydroquinate dehydratase from Bacillus cereus (strain G9842).